A 179-amino-acid chain; its full sequence is Large ribosomal subunit protein uL6 (179 aa).

The protein belongs to the universal ribosomal protein uL6 family. As to quaternary structure, part of the 50S ribosomal subunit.

This protein binds to the 23S rRNA, and is important in its secondary structure. It is located near the subunit interface in the base of the L7/L12 stalk, and near the tRNA binding site of the peptidyltransferase center. This chain is Large ribosomal subunit protein uL6, found in Herpetosiphon aurantiacus (strain ATCC 23779 / DSM 785 / 114-95).